The chain runs to 192 residues: MRVPGIPDEEFIREEKIPMTKEEIRVLALSKARLFYGAKFLDVGSGTGSVSVEAGLIVGEKGKVYAVERDPQAVELTRKNVEKFSLRNVEIIEGEAPEVLNKINDELDSAFIGGTERLEEIIPVVSEKIRRGGMIVLDAILIESAVKALHTLSELGYKAEVIEVIVAKGMKTSKGYAMISRNPIFIIYGEKK.

S-adenosyl-L-methionine contacts are provided by residues Thr20, 44-48 (GSGTG), Glu68, and Ala96.

This sequence belongs to the methyltransferase superfamily. Archaeal-type CbiT family.

It catalyses the reaction Co-precorrin-6B + S-adenosyl-L-methionine = Co-precorrin-7 + S-adenosyl-L-homocysteine + CO2. It functions in the pathway cofactor biosynthesis; adenosylcobalamin biosynthesis; cob(II)yrinate a,c-diamide from sirohydrochlorin (anaerobic route): step 8/10. Its function is as follows. Catalyzes the methylation of C-15 in cobalt-precorrin-6B followed by the decarboxylation of C-12 to form cobalt-precorrin-7. This chain is Probable cobalt-precorrin-6B C(15)-methyltransferase (decarboxylating), found in Sulfolobus acidocaldarius (strain ATCC 33909 / DSM 639 / JCM 8929 / NBRC 15157 / NCIMB 11770).